The primary structure comprises 281 residues: Beta-lactamase (281 aa).

The first 24 residues, 1 to 24 (MKKLIFLIVIALVLSACNSNSSHA), serve as a signal peptide directing secretion. S63 (acyl-ester intermediate) is an active-site residue. 225-227 (KSG) contributes to the substrate binding site.

This sequence belongs to the class-A beta-lactamase family.

It carries out the reaction a beta-lactam + H2O = a substituted beta-amino acid. The chain is Beta-lactamase (blaZ) from Staphylococcus aureus.